Reading from the N-terminus, the 398-residue chain is S-adenosylmethionine synthase (398 aa).

The disordered stretch occupies residues 1–21 (MAANRRLFTSESVTEGHPDKM). His17 is a binding site for ATP. Asp19 serves as a coordination point for Mg(2+). Glu45 contacts K(+). 2 residues coordinate L-methionine: Glu58 and Gln101. The flexible loop stretch occupies residues 101 to 111 (QSADIAGGVNQ). Residues 177–179 (DGK), 244–245 (RF), Asp253, 259–260 (RK), Ala276, and Lys280 each bind ATP. Residue Asp253 coordinates L-methionine. Lys284 is an L-methionine binding site.

Belongs to the AdoMet synthase family. In terms of assembly, homotetramer; dimer of dimers. Mg(2+) is required as a cofactor. It depends on K(+) as a cofactor.

It is found in the cytoplasm. The enzyme catalyses L-methionine + ATP + H2O = S-adenosyl-L-methionine + phosphate + diphosphate. It participates in amino-acid biosynthesis; S-adenosyl-L-methionine biosynthesis; S-adenosyl-L-methionine from L-methionine: step 1/1. Catalyzes the formation of S-adenosylmethionine (AdoMet) from methionine and ATP. The overall synthetic reaction is composed of two sequential steps, AdoMet formation and the subsequent tripolyphosphate hydrolysis which occurs prior to release of AdoMet from the enzyme. The chain is S-adenosylmethionine synthase from Oceanobacillus iheyensis (strain DSM 14371 / CIP 107618 / JCM 11309 / KCTC 3954 / HTE831).